We begin with the raw amino-acid sequence, 217 residues long: MINLDIARRRMVENQIVARGIKDRRVIDAMLKVPRHIFVEEAMSAQAYSDSSLPIGEKQTISQPYMVALMSGMLQLTGKEKVLELGTGSGYQAAILAELADRVYTVERIRPLALRARKALDSLGYLNVNLKIGDGTDGWASEAPFDAILVTAGAPDVPMHLIDQLAVGGKLVIPVGNQSEQTLVRITKGENGAVSREDSIGCRFVKLIGRYGWSGED.

Residue S62 is part of the active site.

Belongs to the methyltransferase superfamily. L-isoaspartyl/D-aspartyl protein methyltransferase family.

Its subcellular location is the cytoplasm. The catalysed reaction is [protein]-L-isoaspartate + S-adenosyl-L-methionine = [protein]-L-isoaspartate alpha-methyl ester + S-adenosyl-L-homocysteine. Its function is as follows. Catalyzes the methyl esterification of L-isoaspartyl residues in peptides and proteins that result from spontaneous decomposition of normal L-aspartyl and L-asparaginyl residues. It plays a role in the repair and/or degradation of damaged proteins. The sequence is that of Protein-L-isoaspartate O-methyltransferase 2 from Geotalea uraniireducens (strain Rf4) (Geobacter uraniireducens).